We begin with the raw amino-acid sequence, 331 residues long: METHSELWSLEAIKEVYNTPIFELIHRANAILRSNFPHSELQTCYLVSIKTGGCTEDCAYCAQSSRYQTHVKPEPMMKITEVLDRAKQAIRAGATRVCLGAAWREVKDNHQFDRTLEMIKGITDMGAEVCCTLGMLTPSQAEKLFEAGLYAYNHNLDSSEGFYKTIITTRKYEDRLRTLDIVEKSGLHVCCGGIIGMGETVEDRVELLHNLARRERMPESVPVNVLWPIKGTPLYDQASISFWEILRTIATARIVFPQSMVRLAAGRAFLSVEQQTLCFIAGANSIFYGEKLLTVDNNDMDADTAMLNLLGMRHRPSFSMERGQPCQSVTC.

One can recognise a Radical SAM core domain in the interval 39–264; it reads SELQTCYLVS…VFPQSMVRLA (226 aa). Residues cysteine 54, cysteine 58, and cysteine 61 each coordinate [4Fe-4S] cluster. Positions 98, 130, 190, and 262 each coordinate [2Fe-2S] cluster.

The protein belongs to the radical SAM superfamily. Biotin synthase family. In terms of assembly, homodimer. It depends on [4Fe-4S] cluster as a cofactor. The cofactor is [2Fe-2S] cluster.

It carries out the reaction (4R,5S)-dethiobiotin + (sulfur carrier)-SH + 2 reduced [2Fe-2S]-[ferredoxin] + 2 S-adenosyl-L-methionine = (sulfur carrier)-H + biotin + 2 5'-deoxyadenosine + 2 L-methionine + 2 oxidized [2Fe-2S]-[ferredoxin]. Its pathway is cofactor biosynthesis; biotin biosynthesis; biotin from 7,8-diaminononanoate: step 2/2. Catalyzes the conversion of dethiobiotin (DTB) to biotin by the insertion of a sulfur atom into dethiobiotin via a radical-based mechanism. This is Biotin synthase from Chlamydia abortus (strain DSM 27085 / S26/3) (Chlamydophila abortus).